We begin with the raw amino-acid sequence, 96 residues long: MLRLDLQFFASKKGVGSTKNGRDSIAKRLGAKRADGQFVTGGSILYRQRGTKIYPGLNVGRGGDDTLYAKVDGIVRFERMGRDRKKVSVYPVVKEA.

A propeptide spanning residues 1 to 9 (MLRLDLQFF) is cleaved from the precursor.

This sequence belongs to the bacterial ribosomal protein bL27 family. In terms of processing, the N-terminus is cleaved by ribosomal processing cysteine protease Prp.

The protein is Large ribosomal subunit protein bL27 of Anoxybacillus flavithermus (strain DSM 21510 / WK1).